Consider the following 660-residue polypeptide: DNA mismatch repair protein MutL (660 aa).

Positions 414 to 433 (SSVKHASRPQNTFTETDHPN) are disordered.

Belongs to the DNA mismatch repair MutL/HexB family.

This protein is involved in the repair of mismatches in DNA. It is required for dam-dependent methyl-directed DNA mismatch repair. May act as a 'molecular matchmaker', a protein that promotes the formation of a stable complex between two or more DNA-binding proteins in an ATP-dependent manner without itself being part of a final effector complex. The chain is DNA mismatch repair protein MutL from Streptococcus pyogenes serotype M6 (strain ATCC BAA-946 / MGAS10394).